A 429-amino-acid chain; its full sequence is Argininosuccinate lyase (429 aa).

This sequence belongs to the lyase 1 family. Argininosuccinate lyase subfamily.

The protein resides in the cytoplasm. The enzyme catalyses 2-(N(omega)-L-arginino)succinate = fumarate + L-arginine. The protein operates within amino-acid biosynthesis; L-arginine biosynthesis; L-arginine from L-ornithine and carbamoyl phosphate: step 3/3. The polypeptide is Argininosuccinate lyase (Pyrobaculum arsenaticum (strain DSM 13514 / JCM 11321 / PZ6)).